A 449-amino-acid chain; its full sequence is MHPSSRANGPAPHKPYNPFYLQLYFWVIIAIILGALLGHCYPAVGQQLKPLGDAFIKLVKMIISPVIFLTIVTGIASVAHVGTVARVFGKAMVYFLFFSTLALLLGLVVAHVVHPGAGMNINPVDLHQGEIANYVEKSHDLTLVGFLMDIIPKTLLSPFVGDNILQVLFVAVLFGIALALAGERGKPVLNLLDALTVPVFKLVQMLMKMAPIGAFGAIAFTIGKYGVDSLVNLGWLVGSFYLTSLLFVLVILGAVSWLCGFSILKLIRYLKAELLLVLGTSSSESALPSLMEKMVQAGCRKSVVGLVVPTGYSFNLDGTNIYMTLAALFIAQATNTELTPAHQLALFLVAMLSSKGAAGVSGAGFITLAATLAVVPEVPIAGMALILGVDRFMSECRSLTNFIGNAVATLVVSRWENALNHEQLKIALDGNEAAYQSLHAKDAEPSLSR.

The next 8 membrane-spanning stretches (helical) occupy residues 18–38 (PFYLQLYFWVIIAIILGALLG), 61–81 (MIISPVIFLTIVTGIASVAHV), 93–113 (VYFLFFSTLALLLGLVVAHVV), 159–179 (FVGDNILQVLFVAVLFGIALA), 202–222 (LVQMLMKMAPIGAFGAIAFTI), 244–264 (SLLFVLVILGAVSWLCGFSIL), 311–331 (GYSFNLDGTNIYMTLAALFIA), and 369–389 (AATLAVVPEVPIAGMALILGV).

The protein belongs to the dicarboxylate/amino acid:cation symporter (DAACS) (TC 2.A.23) family.

It localises to the cell inner membrane. Its function is as follows. Responsible for the transport of dicarboxylates such as succinate, fumarate, and malate from the periplasm across the membrane. The protein is C4-dicarboxylate transport protein of Xylella fastidiosa (strain M12).